Here is a 734-residue protein sequence, read N- to C-terminus: MAPPAKRAKRGWVPPGYKYLGPGNSLDQGEPTNPSDAAAKEHDEAYDQYIKSGKNPYLYFSPADQRFIDQTKDAKDWGGKVGHYFFRTKRAFAPKLSTDSEPGTSGVSRPGKRTKPPAHIFVNQARAKKKRASLAAQQRTLTMSDGTETNQPDTGIANARVERSADGGGSSGGGGSGGGGIGVSTGTYDNQTTYKFLGDGWVEITAHASRLLHLGMPPSENYCRVTVHNNQTTGHGTKVKGNMAYDTHQQIWTPWSLVDANAWGVWFQPSDWQFIQNSMESLNLDSLSQELFNVVVKTVTEQQGAGQDAIKVYNNDLTACMMVALDSNNILPYTPAAQTSETLGFYPWKPTAPAPYRYYFFMPRQLSVTSSNSAEGTQITDTIGEPQALNSQFFTIENTLPITLLRTGDEFTTGTYIFNTDPLKLTHTWQTNRHLACLQGITDLPTSDTATASLTANGDRFGSTQTQNVNYVTEALRTRPAQIGFMQPHDNFEANRGGPFKVPVVPLDITAGEDHDANGAIRFNYGKQHGEDWAKQGAAPERYTWDAIDSAAGRDTARCFVQSAPISIPPNQNQILQREDAIAGRTNMHYTNVFNSYGPLSAFPHPDPIYPNGQIWDKELDLEHKPRLHVTAPFVCKNNPPGQLFVHLGPNLTDQFDPNSTTVSRIVTYSTFYWKGILKFKAKLRPNLTWNPVYQATTDSVANSYMNVKKWLPSATGNMHSDPLICRPVPHMTY.

A compositionally biased stretch (basic residues) spans 1–10; sequence MAPPAKRAKR. 3 disordered regions span residues 1 to 42, 95 to 116, and 134 to 154; these read MAPP…AKEH, KLST…RTKP, and LAAQ…QPDT. The Nuclear localization signal signature appears at 4 to 13; the sequence is PAKRAKRGWV. The tract at residues 19-64 is phospholipase A2-like; the sequence is YLGPGNSLDQGEPTNPSDAAAKEHDEAYDQYIKSGKNPYLYFSPAD. Polar residues-rich tracts occupy residues 25–35, 97–107, and 140–153; these read SLDQGEPTNPS, STDSEPGTSGV, and TLTM…NQPD. Asn-328 lines the Mg(2+) pocket.

The protein belongs to the parvoviridae capsid protein family.

Its subcellular location is the virion. The protein resides in the host nucleus. In terms of biological role, capsid protein self-assembles to form an icosahedral capsid with a T=1 symmetry, about 22 nm in diameter, and consisting of 60 copies of two size variants of the capsid proteins, VP1 and VP2, which differ by the presence of an N-terminal extension in the minor protein VP1. The capsid encapsulates the genomic ssDNA. Capsid proteins are responsible for the attachment to host cell receptors. This attachment induces virion internalization predominantly through clathrin-dependent endocytosis. Binding to the host receptors also induces capsid rearrangements leading to surface exposure of VP1 N-terminus, specifically its phospholipase A2-like region and putative nuclear localization signal(s). VP1 N-terminus might serve as a lipolytic enzyme to breach the endosomal membrane during entry into host cell and might contribute to virus transport to the nucleus. The sequence is that of Capsid protein VP1 from Cricetidae sp. (Hamster).